A 149-amino-acid polypeptide reads, in one-letter code: MEFQGQHDNPANRVDEYGNPFPLAGAWGERTRSRHRRAVPGPQGRAQDRWILHRSGSSSSSSSSEDDGMGGRRKKGMKEKIKEKLPGGHKDNQQHMATGTGTGGAYGPGTGTGGAYGQQGHTGMAGAGTGTGEKKGIMDKIKEKLPGQH.

The segment at 1–149 (MEFQGQHDNP…KIKEKLPGQH (149 aa)) is disordered. The span at 78 to 93 (KEKIKEKLPGGHKDNQ) shows a compositional bias: basic and acidic residues. The span at 100–117 (TGTGGAYGPGTGTGGAYG) shows a compositional bias: gly residues. Over residues 132–149 (GEKKGIMDKIKEKLPGQH) the composition is skewed to basic and acidic residues.

This sequence belongs to the plant dehydrin family.

The polypeptide is Dehydrin Rab15 (RAB15) (Triticum aestivum (Wheat)).